Reading from the N-terminus, the 25-residue chain is Xenoposin precursor fragment BM1 (25 aa).

Expressed by the skin glands.

It is found in the secreted. Functionally, antimicrobial peptide. In Xenopus boumbaensis (Mawa clawed frog), this protein is Xenoposin precursor fragment BM1.